Here is a 116-residue protein sequence, read N- to C-terminus: Large ribosomal subunit protein uL22c (116 aa).

This sequence belongs to the universal ribosomal protein uL22 family. As to quaternary structure, part of the 50S ribosomal subunit.

The protein resides in the plastid. Its subcellular location is the chloroplast. This protein binds specifically to 23S rRNA. In terms of biological role, the globular domain of the protein is located near the polypeptide exit tunnel on the outside of the subunit, while an extended beta-hairpin is found that lines the wall of the exit tunnel in the center of the 70S ribosome. In Psilotum nudum (Whisk fern), this protein is Large ribosomal subunit protein uL22c (rpl22).